A 400-amino-acid chain; its full sequence is Na(+)/H(+) antiporter NhaA (400 aa).

A run of 11 helical transmembrane segments spans residues 9–29, 60–80, 96–116, 127–147, 155–175, 180–200, 210–230, 263–283, 294–314, 327–347, and 366–386; these read FLVSEASGGIFLIAAAVIAMV, LILWVNDGLMAIFFFVLGLEL, VLPAVGAIGGIVVPAFIFYLF, WAIPTATDTAFALGIIMILGA, IFLVTLAIIDDVCAILIMAIF, LSLISFGVAAIVILGLLALNL, LILGIILWISVLKSGVHATLA, YFVLPVFAFVNAGISLKGIGL, VILGLFLGKQIGVFGFCFVAI, WISFYGLCILTGIGFTMSLFI, and VLIASVISGVLGYIVLYIASV.

It belongs to the NhaA Na(+)/H(+) (TC 2.A.33) antiporter family.

It is found in the cell inner membrane. The catalysed reaction is Na(+)(in) + 2 H(+)(out) = Na(+)(out) + 2 H(+)(in). Its function is as follows. Na(+)/H(+) antiporter that extrudes sodium in exchange for external protons. This Campylobacter curvus (strain 525.92) protein is Na(+)/H(+) antiporter NhaA.